The sequence spans 373 residues: Decapping nuclease RAI1 (373 aa).

Glutamate 136 contacts a divalent metal cation. The substrate site is built by cysteine 168 and glutamate 185. 3 residues coordinate a divalent metal cation: aspartate 187, glutamate 205, and leucine 206. Substrate-binding residues include lysine 207 and glutamine 231. A disordered region spans residues 340 to 373; the sequence is KDKPPGFEPSDAADAEPSMAEEPVPETASASGAY.

The protein belongs to the DXO/Dom3Z family. Interacts with RAT1; the interaction is direct, stabilizes RAT1 protein structure and stimulates its exoribonuclease activity. The interaction also stimulates RAI1 pyrophosphohydrolase activity, probably by recruiting it to mRNA substrates. The cofactor is a divalent metal cation.

It is found in the nucleus. It catalyses the reaction a 5'-end NAD(+)-phospho-ribonucleoside in mRNA + H2O = a 5'-end phospho-ribonucleoside in mRNA + NAD(+) + H(+). The catalysed reaction is a 5'-end (N(7)-methyl 5'-triphosphoguanosine)-ribonucleoside-ribonucleotide in mRNA + H2O = a (N(7)-methyl 5'-triphosphoguanosine)-nucleoside + a 5'-end phospho-ribonucleoside in mRNA + H(+). The enzyme catalyses a 5'-end triphospho-ribonucleoside in mRNA + H2O = a 5'-end phospho-ribonucleoside in mRNA + diphosphate + H(+). Its function is as follows. Decapping enzyme for NAD-capped RNAs: specifically hydrolyzes the nicotinamide adenine dinucleotide (NAD) cap from a subset of RNAs by removing the entire NAD moiety from the 5'-end of an NAD-capped RNA. The NAD-cap is present at the 5'-end of some RNAs and snoRNAs. In contrast to the canonical 5'-end N7 methylguanosine (m7G) cap, the NAD cap promotes mRNA decay. Also acts as a non-canonical decapping enzyme that removes the entire cap structure of m7G capped or incompletely capped RNAs. Has decapping activity toward incomplete 5'-end m7G cap mRNAs such as unmethylated 5'-end-capped RNA (cap0), while it has no activity toward 2'-O-ribose methylated m7G cap (cap1). Also possesses RNA 5'-pyrophosphohydrolase activity by hydrolyzing the 5'-end triphosphate to release pyrophosphates. Stimulates exoribonuclease activity of Rat1, allowing it to degrade RNAs with stable secondary structure more effectively. The chain is Decapping nuclease RAI1 (RAI1) from Chaetomium globosum (strain ATCC 6205 / CBS 148.51 / DSM 1962 / NBRC 6347 / NRRL 1970) (Soil fungus).